Reading from the N-terminus, the 217-residue chain is Deoxyribose-phosphate aldolase (217 aa).

Catalysis depends on Asp-95, which acts as the Proton donor/acceptor. The active-site Schiff-base intermediate with acetaldehyde is the Lys-156. Lys-184 acts as the Proton donor/acceptor in catalysis.

Belongs to the DeoC/FbaB aldolase family. DeoC type 1 subfamily.

It localises to the cytoplasm. It carries out the reaction 2-deoxy-D-ribose 5-phosphate = D-glyceraldehyde 3-phosphate + acetaldehyde. The protein operates within carbohydrate degradation; 2-deoxy-D-ribose 1-phosphate degradation; D-glyceraldehyde 3-phosphate and acetaldehyde from 2-deoxy-alpha-D-ribose 1-phosphate: step 2/2. Catalyzes a reversible aldol reaction between acetaldehyde and D-glyceraldehyde 3-phosphate to generate 2-deoxy-D-ribose 5-phosphate. This Thermosynechococcus vestitus (strain NIES-2133 / IAM M-273 / BP-1) protein is Deoxyribose-phosphate aldolase.